Reading from the N-terminus, the 601-residue chain is Elongation factor 4 (601 aa).

In terms of domain architecture, tr-type G spans 7–189; it reads DNIRNFSIVA…AIVKRLPAPK (183 aa). Residues 19 to 24 and 136 to 139 each bind GTP; these read DHGKST and NKVD.

It belongs to the TRAFAC class translation factor GTPase superfamily. Classic translation factor GTPase family. LepA subfamily.

It localises to the cell inner membrane. The enzyme catalyses GTP + H2O = GDP + phosphate + H(+). Its function is as follows. Required for accurate and efficient protein synthesis under certain stress conditions. May act as a fidelity factor of the translation reaction, by catalyzing a one-codon backward translocation of tRNAs on improperly translocated ribosomes. Back-translocation proceeds from a post-translocation (POST) complex to a pre-translocation (PRE) complex, thus giving elongation factor G a second chance to translocate the tRNAs correctly. Binds to ribosomes in a GTP-dependent manner. In Methylorubrum extorquens (strain CM4 / NCIMB 13688) (Methylobacterium extorquens), this protein is Elongation factor 4.